A 931-amino-acid polypeptide reads, in one-letter code: Chitin synthase 7 (931 aa).

2 disordered regions span residues 1–34 (MVRH…GHYR) and 56–92 (GDVG…ASSS). Composition is skewed to polar residues over residues 7–28 (FTNS…TPYP) and 83–92 (PLTTGPASSS). An N-linked (GlcNAc...) asparagine glycan is attached at N536. Helical transmembrane passes span 573–593 (IFSL…FSII), 615–635 (INLV…VLAL), and 647–667 (ILTL…SIIL). The N-linked (GlcNAc...) asparagine glycan is linked to N691. 2 helical membrane passes run 695-715 (GVLV…SFLY) and 725-745 (FPQY…YAFC). The segment at 763 to 789 (LPAISSSKQKDGETAVVEEQQRSQGEL) is disordered. N-linked (GlcNAc...) asparagine glycosylation occurs at N819. A helical membrane pass occupies residues 826–846 (LVVVWLLTNAALAISIQTLNG). N-linked (GlcNAc...) asparagine glycans are attached at residues N866 and N874. A helical transmembrane segment spans residues 899–919 (AILWTTFALSMVRFIGCVFYW).

This sequence belongs to the chitin synthase family. Class III subfamily.

Its subcellular location is the cell membrane. It carries out the reaction [(1-&gt;4)-N-acetyl-beta-D-glucosaminyl](n) + UDP-N-acetyl-alpha-D-glucosamine = [(1-&gt;4)-N-acetyl-beta-D-glucosaminyl](n+1) + UDP + H(+). Its function is as follows. Polymerizes chitin, a structural polymer of the cell wall and septum, by transferring the sugar moiety of UDP-GlcNAc to the non-reducing end of the growing chitin polymer. This is Chitin synthase 7 from Cryptococcus neoformans var. grubii serotype A (strain H99 / ATCC 208821 / CBS 10515 / FGSC 9487) (Filobasidiella neoformans var. grubii).